The primary structure comprises 235 residues: 15,16-dihydrobiliverdin:ferredoxin oxidoreductase (235 aa).

The protein belongs to the HY2 family.

It catalyses the reaction 15,16-dihydrobiliverdin + oxidized 2[4Fe-4S]-[ferredoxin] = biliverdin IXalpha + reduced 2[4Fe-4S]-[ferredoxin] + 2 H(+). Functionally, catalyzes the two-electron reduction of biliverdin IX-alpha at the C15 methine bridge. The chain is 15,16-dihydrobiliverdin:ferredoxin oxidoreductase from Synechococcus sp. (strain CC9902).